A 400-amino-acid polypeptide reads, in one-letter code: Peroxisome biogenesis factor 16 (400 aa).

The disordered stretch occupies residues 176 to 226 (QKQFQNKRPAVTMSINNNNNINNNDNNNINNNNNTNDDNFNNNNNNNNNRR). Positions 190-224 (INNNNNINNNDNNNINNNNNTNDDNFNNNNNNNNN) are enriched in low complexity.

The protein belongs to the peroxin-16 family.

The protein localises to the cytoplasm. Functionally, required for peroxisome membrane biogenesis. The chain is Peroxisome biogenesis factor 16 (pex16) from Dictyostelium discoideum (Social amoeba).